A 666-amino-acid chain; its full sequence is Probable potassium transport system protein Kup (666 aa).

A run of 12 helical transmembrane segments spans residues 16-36 (GFIIALGIVYGDIGTSPLYTM), 58-78 (ISLIIWTLTLITTIKYVLVAL), 99-119 (TPWLIVPAVIGGATLLSDGAL), 141-161 (IFQNQSNVIFATLFILLLLFA), 167-187 (TGVIGKLFGPIMFIWFAFLGI), 221-241 (IFILGSIFLATTGAEALYSDL), 253-273 (WPFVKVAIILSYCGQGAWILA), 292-312 (FTMHVVILATLAAIIASQALI), 343-363 (TYIPVINWFLFAITTSIVLLF), 373-393 (YGLAITITMLMTTILLSFFLI), 402-422 (VLLMMIFFGILEGIFFLASAV), and 424-444 (FMHGGYVVVIIAVAIIFIMII).

Belongs to the HAK/KUP transporter (TC 2.A.72) family.

Its subcellular location is the cell membrane. The catalysed reaction is K(+)(in) + H(+)(in) = K(+)(out) + H(+)(out). Transport of potassium into the cell. Likely operates as a K(+):H(+) symporter. The chain is Probable potassium transport system protein Kup from Streptococcus agalactiae serotype III (strain NEM316).